The following is a 137-amino-acid chain: Small ribosomal subunit protein uS12 (137 aa).

Positions 1–25 (MPTINQLVRQGRKSKTYKSDSPALS) are disordered. Aspartate 102 is modified (3-methylthioaspartic acid).

Belongs to the universal ribosomal protein uS12 family. Part of the 30S ribosomal subunit. Contacts proteins S8 and S17. May interact with IF1 in the 30S initiation complex.

With S4 and S5 plays an important role in translational accuracy. Its function is as follows. Interacts with and stabilizes bases of the 16S rRNA that are involved in tRNA selection in the A site and with the mRNA backbone. Located at the interface of the 30S and 50S subunits, it traverses the body of the 30S subunit contacting proteins on the other side and probably holding the rRNA structure together. The combined cluster of proteins S8, S12 and S17 appears to hold together the shoulder and platform of the 30S subunit. This chain is Small ribosomal subunit protein uS12, found in Finegoldia magna (strain ATCC 29328 / DSM 20472 / WAL 2508) (Peptostreptococcus magnus).